The primary structure comprises 142 residues: Hemoglobin subunit alpha-4 (142 aa).

The Globin domain maps to 2–142; sequence TLTDSDKAAI…VATVLTSKYR (141 aa). Histidine 59 is a binding site for O2. Histidine 88 serves as a coordination point for heme b.

Belongs to the globin family. In terms of assembly, heterotetramer of two alpha chains and two beta chains. In terms of tissue distribution, red blood cells.

This is a larval (tadpole) alpha-globin. This chain is Hemoglobin subunit alpha-4 (hba4), found in Xenopus laevis (African clawed frog).